Here is a 94-residue protein sequence, read N- to C-terminus: CRISPR-associated endoribonuclease Cas2 1 (94 aa).

D8 contacts Mg(2+).

It belongs to the CRISPR-associated endoribonuclease Cas2 protein family. In terms of assembly, homodimer, forms a heterotetramer with a Cas1 homodimer. Mg(2+) serves as cofactor.

Functionally, CRISPR (clustered regularly interspaced short palindromic repeat), is an adaptive immune system that provides protection against mobile genetic elements (viruses, transposable elements and conjugative plasmids). CRISPR clusters contain sequences complementary to antecedent mobile elements and target invading nucleic acids. CRISPR clusters are transcribed and processed into CRISPR RNA (crRNA). Functions as a ssRNA-specific endoribonuclease. Involved in the integration of spacer DNA into the CRISPR cassette. In Synechocystis sp. (strain ATCC 27184 / PCC 6803 / Kazusa), this protein is CRISPR-associated endoribonuclease Cas2 1.